A 467-amino-acid polypeptide reads, in one-letter code: Retinoic acid receptor RXR-alpha (467 aa).

The interval 1–112 (MDTKHFLPLD…MNPVSSTEDI (112 aa)) is disordered. The segment at 1–139 (MDTKHFLPLD…GNMASFTKHI (139 aa)) is modulating domain. K4 is covalently cross-linked (Glycyl lysine isopeptide (Lys-Gly) (interchain with G-Cter in SUMO2)). The span at 11–25 (FSTQVNSSSLNSPTG) shows a compositional bias: polar residues. Phosphoserine is present on residues S22 and S28. The segment covering 32-52 (PSLHPSLGPGIGSPLGSPGQL) has biased composition (low complexity). Positions 54–63 (SPISTLSSPI) are enriched in polar residues. Residues S61 and S75 each carry the phosphoserine; by MAPK8 and MAPK9 modification. A compositionally biased stretch (polar residues) spans 83-109 (SVPTTPTLGFGTGSPQLNSPMNPVSST). Phosphothreonine; by MAPK8 and MAPK9 is present on T87. K113 participates in a covalent cross-link: Glycyl lysine isopeptide (Lys-Gly) (interchain with G-Cter in SUMO). Position 134 is a phosphoserine (S134). Zn(2+) is bound by residues C140 and C143. Residues 140–160 (CAICGDRSSGKHYGVYSCEGC) form an NR C4-type zinc finger. The nuclear receptor DNA-binding region spans 140–205 (CAICGDRSSG…RYQKCLAMGM (66 aa)). An N6-acetyllysine modification is found at K150. The Zn(2+) site is built by C157 and C160. The nuclear localization signal stretch occupies residues 165-170 (KRTVRK). Zn(2+) is bound by residues C176, C182, C192, and C195. An NR C4-type zinc finger spans residues 176–200 (CRDNKDCLIDKRQRNRCQYCRYQKC). Positions 206-229 (KREAVQEERQRGKDRNENEVESTS) are hinge. Residues 211–223 (QEERQRGKDRNEN) are compositionally biased toward basic and acidic residues. A disordered region spans residues 211–233 (QEERQRGKDRNENEVESTSSANE). In terms of domain architecture, NR LBD spans 232–463 (NEDMPVEKIL…TFLMEMLEAP (232 aa)). S264 is modified (phosphoserine). A Phosphoserine; by MAPK8 and MAPK9 modification is found at S265. The 9-cis-retinoate site is built by R321 and A332. Residues R321 and A332 each coordinate all-trans-retinoate. The segment at 353 to 373 (RVLTELVSKMRDMQMDKTELG) is required for nuclear export.

This sequence belongs to the nuclear hormone receptor family. NR2 subfamily. In terms of assembly, homodimer. Heterodimer with RARA; required for ligand-dependent retinoic acid receptor transcriptional activity. Heterodimer with PPARA (via the leucine-like zipper in the LBD); the interaction is required for PPARA transcriptional activity. Heterodimerizes with PPARG. Heterodimerizes (via NR LBD) with RARB. Heterodimerizes with NR1H4; the heterodimerization enhances the binding affinity for LXXLL motifs from coactivators. Interacts with coactivator NCO6. Interacts with coactivator NCO3. Interacts with coactivator FAM120B. Interacts with coactivator PELP1, SENP6, SFPQ, DNTTIP2 and RNF8. Interacts with PRMT2. Interacts with ASXL1. Interacts with BHLHE40/DEC1, BHLHE41/DEC2, NCOR1 and NCOR2. Interacts in a ligand-dependent fashion with MED1 and NCOA1. Interacts with VDR. Interacts with EP300; the interaction is decreased by 9-cis retinoic acid. Heterodimer (via C-terminus) with NR4A1 (via DNA-binding domain); the interaction is enhanced by 9-cis retinoic acid. NR4A1 competes with EP300 for interaction with RXRA and thereby attenuates EP300 mediated acetylation of RXRA. In the absence of hormonal ligand, interacts with TACC1. Interacts ith IGFBP3. Post-translationally, acetylated by EP300; acetylation enhances DNA binding and transcriptional activity. Phosphorylated on serine and threonine residues mainly in the N-terminal modulating domain. Constitutively phosphorylated on Ser-22 in the presence or absence of ligand. Under stress conditions, hyperphosphorylated by activated JNK on Ser-61, Ser-75, Thr-87 and Ser-265. Phosphorylated on Ser-28, in vitro, by PKA. This phosphorylation is required for repression of cAMP-mediated transcriptional activity of RARA. In terms of processing, ubiquitinated by UBR5, leading to its degradation: UBR5 specifically recognizes and binds ligand-bound RXRA when it is not associated with coactivators (NCOAs). In presence of NCOAs, the UBR5-degron is not accessible, preventing its ubiquitination and degradation. Post-translationally, sumoylation negatively regulates transcriptional activity. Desumoylated specifically by SENP6. Expressed in macrophages (at protein level).

It is found in the nucleus. The protein resides in the cytoplasm. Its subcellular location is the mitochondrion. Its function is as follows. Receptor for retinoic acid that acts as a transcription factor. Forms homo- or heterodimers with retinoic acid receptors (RARs) and binds to target response elements in response to their ligands, all-trans or 9-cis retinoic acid, to regulate gene expression in various biological processes. The RAR/RXR heterodimers bind to the retinoic acid response elements (RARE) composed of tandem 5'-AGGTCA-3' sites known as DR1-DR5 to regulate transcription. The high affinity ligand for retinoid X receptors (RXRs) is 9-cis retinoic acid. In the absence of ligand, the RXR-RAR heterodimers associate with a multiprotein complex containing transcription corepressors that induce histone deacetylation, chromatin condensation and transcriptional suppression. On ligand binding, the corepressors dissociate from the receptors and coactivators are recruited leading to transcriptional activation. Serves as a common heterodimeric partner for a number of nuclear receptors, such as RARA, RARB and PPARA. The RXRA/RARB heterodimer can act as a transcriptional repressor or transcriptional activator, depending on the RARE DNA element context. The RXRA/PPARA heterodimer is required for PPARA transcriptional activity on fatty acid oxidation genes such as ACOX1 and the P450 system genes. Together with RARA, positively regulates microRNA-10a expression, thereby inhibiting the GATA6/VCAM1 signaling response to pulsatile shear stress in vascular endothelial cells. Acts as an enhancer of RARA binding to RARE DNA element. May facilitate the nuclear import of heterodimerization partners such as VDR and NR4A1. Promotes myelin debris phagocytosis and remyelination by macrophages. Plays a role in the attenuation of the innate immune system in response to viral infections, possibly by negatively regulating the transcription of antiviral genes such as type I IFN genes. Involved in the regulation of calcium signaling by repressing ITPR2 gene expression, thereby controlling cellular senescence. This Mus musculus (Mouse) protein is Retinoic acid receptor RXR-alpha (Rxra).